The following is a 546-amino-acid chain: Chaperonin GroEL (546 aa).

ATP is bound by residues 30-33, Lys-51, 87-91, Gly-415, 479-481, and Asp-495; these read TLGP, DGTTT, and NAA.

Belongs to the chaperonin (HSP60) family. Forms a cylinder of 14 subunits composed of two heptameric rings stacked back-to-back. Interacts with the co-chaperonin GroES.

The protein localises to the cytoplasm. It carries out the reaction ATP + H2O + a folded polypeptide = ADP + phosphate + an unfolded polypeptide.. Functionally, together with its co-chaperonin GroES, plays an essential role in assisting protein folding. The GroEL-GroES system forms a nano-cage that allows encapsulation of the non-native substrate proteins and provides a physical environment optimized to promote and accelerate protein folding. This is Chaperonin GroEL from Bordetella avium (strain 197N).